A 258-amino-acid chain; its full sequence is Tryptophan synthase alpha chain (258 aa).

Catalysis depends on proton acceptor residues Glu52 and Asp63.

The protein belongs to the TrpA family. As to quaternary structure, tetramer of two alpha and two beta chains.

The catalysed reaction is (1S,2R)-1-C-(indol-3-yl)glycerol 3-phosphate + L-serine = D-glyceraldehyde 3-phosphate + L-tryptophan + H2O. It participates in amino-acid biosynthesis; L-tryptophan biosynthesis; L-tryptophan from chorismate: step 5/5. The alpha subunit is responsible for the aldol cleavage of indoleglycerol phosphate to indole and glyceraldehyde 3-phosphate. The polypeptide is Tryptophan synthase alpha chain (Streptococcus pneumoniae serotype 4 (strain ATCC BAA-334 / TIGR4)).